We begin with the raw amino-acid sequence, 531 residues long: CTP synthase (531 aa).

Residues 1-267 (MTKYIIITGG…ASKILSKLNL (267 aa)) form an amidoligase domain region. A CTP-binding site is contributed by serine 13. Serine 13 contacts UTP. 14-19 (SVGKGT) contributes to the ATP binding site. Tyrosine 54 is an L-glutamine binding site. Residue aspartate 71 participates in ATP binding. Mg(2+) is bound by residues aspartate 71 and glutamate 141. CTP-binding positions include 148–150 (DIE), 188–193 (KTKPLQ), and lysine 224. UTP-binding positions include 188 to 193 (KTKPLQ) and lysine 224. The Glutamine amidotransferase type-1 domain occupies 292–531 (KIALVGKYTK…IGFLRAAAGV (240 aa)). L-glutamine is bound at residue glycine 355. Residue cysteine 382 is the Nucleophile; for glutamine hydrolysis of the active site. L-glutamine is bound by residues 383-386 (YGMQ), glutamate 406, and arginine 463. Residues histidine 507 and glutamate 509 contribute to the active site.

Belongs to the CTP synthase family. In terms of assembly, homotetramer.

The enzyme catalyses UTP + L-glutamine + ATP + H2O = CTP + L-glutamate + ADP + phosphate + 2 H(+). It carries out the reaction L-glutamine + H2O = L-glutamate + NH4(+). The catalysed reaction is UTP + NH4(+) + ATP = CTP + ADP + phosphate + 2 H(+). The protein operates within pyrimidine metabolism; CTP biosynthesis via de novo pathway; CTP from UDP: step 2/2. Its activity is regulated as follows. Allosterically activated by GTP, when glutamine is the substrate; GTP has no effect on the reaction when ammonia is the substrate. The allosteric effector GTP functions by stabilizing the protein conformation that binds the tetrahedral intermediate(s) formed during glutamine hydrolysis. Inhibited by the product CTP, via allosteric rather than competitive inhibition. Functionally, catalyzes the ATP-dependent amination of UTP to CTP with either L-glutamine or ammonia as the source of nitrogen. Regulates intracellular CTP levels through interactions with the four ribonucleotide triphosphates. This chain is CTP synthase, found in Sulfurisphaera tokodaii (strain DSM 16993 / JCM 10545 / NBRC 100140 / 7) (Sulfolobus tokodaii).